A 435-amino-acid chain; its full sequence is Putative F-box/FBD/LRR-repeat protein At5g56810 (435 aa).

The F-box domain maps to 14 to 62 (PDRISQLPNDLLFRILSLIPVSDAMSTSLLSKRWKSVWKMLPTLVYNEN). 6 LRR repeats span residues 64-95 (CSNI…TLEL), 146-173 (LKLQ…YLTC), 174-199 (VNFE…FLQR), 222-248 (KEQA…NIFD), 266-291 (SVRV…SLDL), and 316-341 (YDNF…KLNH). In terms of domain architecture, FBD spans 353–404 (CSVSEPSSVPECLSFHLETFQWIGYAGTFEEIAAAVYVLKNARCLKNATISL).

The chain is Putative F-box/FBD/LRR-repeat protein At5g56810 from Arabidopsis thaliana (Mouse-ear cress).